The chain runs to 199 residues: Dephospho-CoA kinase (199 aa).

One can recognise a DPCK domain in the interval 3-199 (VIGLTGSIGM…AAAKMPRRRS (197 aa)). 11–16 (GMGKST) serves as a coordination point for ATP.

This sequence belongs to the CoaE family.

The protein localises to the cytoplasm. The catalysed reaction is 3'-dephospho-CoA + ATP = ADP + CoA + H(+). The protein operates within cofactor biosynthesis; coenzyme A biosynthesis; CoA from (R)-pantothenate: step 5/5. Catalyzes the phosphorylation of the 3'-hydroxyl group of dephosphocoenzyme A to form coenzyme A. This is Dephospho-CoA kinase from Nitrobacter winogradskyi (strain ATCC 25391 / DSM 10237 / CIP 104748 / NCIMB 11846 / Nb-255).